A 914-amino-acid chain; its full sequence is Exoglucanase-2 (914 aa).

The N-terminal stretch at 1 to 33 is a signal peptide; that stretch reads MKRRLMKGISLLTLVFLIGIMLQLSLKSELTAY. Residues 763–914 form the CBM3 domain; the sequence is VEGVLIIQSF…SGNLVYGIEP (152 aa).

It belongs to the glycosyl hydrolase 48 (cellulase L) family.

The catalysed reaction is Hydrolysis of (1-&gt;4)-beta-D-glucosidic linkages in cellulose and cellotetraose, releasing cellobiose from the non-reducing ends of the chains.. This chain is Exoglucanase-2 (celY), found in Thermoclostridium stercorarium (strain ATCC 35414 / DSM 8532 / NCIMB 11754) (Clostridium stercorarium).